Reading from the N-terminus, the 105-residue chain is MNTVDFSKGLVPTIILDDQNGEVLMLAYMNQESYQKTLETGYTWFFSRSRNELWNKGETSGNTQKVKQIWTDCDNDTLLIRVIQTGPACHTGKKSCFFNLIKEDF.

Aspartate 72 is a Mg(2+) binding site. Cysteine 73 is a Zn(2+) binding site. Mg(2+)-binding residues include aspartate 74 and aspartate 76. Zn(2+) is bound by residues cysteine 89 and cysteine 96.

It belongs to the PRA-CH family. As to quaternary structure, homodimer. The cofactor is Mg(2+). Zn(2+) serves as cofactor.

It localises to the cytoplasm. It carries out the reaction 1-(5-phospho-beta-D-ribosyl)-5'-AMP + H2O = 1-(5-phospho-beta-D-ribosyl)-5-[(5-phospho-beta-D-ribosylamino)methylideneamino]imidazole-4-carboxamide. It functions in the pathway amino-acid biosynthesis; L-histidine biosynthesis; L-histidine from 5-phospho-alpha-D-ribose 1-diphosphate: step 3/9. In terms of biological role, catalyzes the hydrolysis of the adenine ring of phosphoribosyl-AMP. The polypeptide is Phosphoribosyl-AMP cyclohydrolase (Listeria innocua serovar 6a (strain ATCC BAA-680 / CLIP 11262)).